The sequence spans 344 residues: Sulfate/thiosulfate import ATP-binding protein CysA (344 aa).

The ABC transporter domain maps to 9 to 239; sequence IQVSQVSKQF…PATPFVMSFI (231 aa). ATP is bound at residue 41-48; it reads GPSGSGKS.

The protein belongs to the ABC transporter superfamily. Sulfate/tungstate importer (TC 3.A.1.6) family. The complex is composed of two ATP-binding proteins (CysA), two transmembrane proteins (CysT and CysW) and a solute-binding protein (CysP).

Its subcellular location is the cell inner membrane. The catalysed reaction is sulfate(out) + ATP + H2O = sulfate(in) + ADP + phosphate + H(+). It catalyses the reaction thiosulfate(out) + ATP + H2O = thiosulfate(in) + ADP + phosphate + H(+). Part of the ABC transporter complex CysAWTP involved in sulfate/thiosulfate import. Responsible for energy coupling to the transport system. In Synechococcus elongatus (strain ATCC 33912 / PCC 7942 / FACHB-805) (Anacystis nidulans R2), this protein is Sulfate/thiosulfate import ATP-binding protein CysA.